The primary structure comprises 235 residues: Fibrillarin-like rRNA/tRNA 2'-O-methyltransferase (235 aa).

Residues 91 to 92 (TT), 110 to 111 (EF), 137 to 138 (DA), and 157 to 160 (DVAQ) contribute to the S-adenosyl-L-methionine site.

It belongs to the methyltransferase superfamily. Fibrillarin family. Interacts with nop5. Component of box C/D small ribonucleoprotein (sRNP) particles that contain rpl7ae, FlpA and nop5, plus a guide RNA.

Its function is as follows. Involved in pre-rRNA and tRNA processing. Utilizes the methyl donor S-adenosyl-L-methionine to catalyze the site-specific 2'-hydroxyl methylation of ribose moieties in rRNA and tRNA. Site specificity is provided by a guide RNA that base pairs with the substrate. Methylation occurs at a characteristic distance from the sequence involved in base pairing with the guide RNA. The protein is Fibrillarin-like rRNA/tRNA 2'-O-methyltransferase of Pyrobaculum islandicum (strain DSM 4184 / JCM 9189 / GEO3).